The chain runs to 187 residues: UPF0301 protein YqgE (187 aa).

Belongs to the UPF0301 (AlgH) family.

The sequence is that of UPF0301 protein YqgE from Escherichia coli O7:K1 (strain IAI39 / ExPEC).